The following is a 287-amino-acid chain: Diaminopimelate epimerase (287 aa).

Positions 15 and 66 each coordinate substrate. Cysteine 75 acts as the Proton donor in catalysis. Substrate contacts are provided by residues 76–77 (GN), asparagine 170, asparagine 203, and 221–222 (ER). Residue cysteine 230 is the Proton acceptor of the active site. 231 to 232 (GT) serves as a coordination point for substrate.

It belongs to the diaminopimelate epimerase family. Homodimer.

The protein resides in the cytoplasm. It carries out the reaction (2S,6S)-2,6-diaminopimelate = meso-2,6-diaminopimelate. It participates in amino-acid biosynthesis; L-lysine biosynthesis via DAP pathway; DL-2,6-diaminopimelate from LL-2,6-diaminopimelate: step 1/1. Catalyzes the stereoinversion of LL-2,6-diaminopimelate (L,L-DAP) to meso-diaminopimelate (meso-DAP), a precursor of L-lysine and an essential component of the bacterial peptidoglycan. In Desulfovibrio desulfuricans (strain ATCC 27774 / DSM 6949 / MB), this protein is Diaminopimelate epimerase.